A 493-amino-acid polypeptide reads, in one-letter code: Ferruginol synthase 1 (493 aa).

Residues 2–22 (DSFPLLAALFFILAATWFISF) traverse the membrane as a helical segment. Cys437 serves as a coordination point for heme.

Belongs to the cytochrome P450 family. Heme is required as a cofactor. Expressed in leaf glandular trichomes.

It localises to the membrane. It carries out the reaction abieta-8,11,13-triene + reduced [NADPH--hemoprotein reductase] + O2 = ferruginol + oxidized [NADPH--hemoprotein reductase] + H2O + H(+). The catalysed reaction is ferruginol + reduced [NADPH--hemoprotein reductase] + O2 = 11-hydroxyferruginol + oxidized [NADPH--hemoprotein reductase] + H2O + H(+). It catalyses the reaction miltiradiene + 2 reduced [NADPH--hemoprotein reductase] + 2 O2 = 11-oxomiltiradiene + 2 oxidized [NADPH--hemoprotein reductase] + 3 H2O + 2 H(+). The protein operates within secondary metabolite biosynthesis; terpenoid biosynthesis. Monooxygenase involved in the biosynthesis of labdane-related diterpenes natural products. Catalyzes the oxidation of abietatriene to produce ferruginol. Catalyzes the oxidation of ferruginol at C-12 to produce 11-hydroxyferruginol. Ferruginol and 11-hydroxyferruginol are intermediates in the biosynthesis of carnosate, a potent antioxidant. May also convert miltiradiene into 11-oxomiltiradiene. This Rosmarinus officinalis (Rosemary) protein is Ferruginol synthase 1.